A 359-amino-acid polypeptide reads, in one-letter code: Protein RecA (359 aa).

64-71 is a binding site for ATP; it reads GHESSGKT. The interval 329–359 is disordered; it reads KYSNKDSNDSPKEGSKIKTKVNPAVTQDELI. Over residues 331 to 344 the composition is skewed to basic and acidic residues; sequence SNKDSNDSPKEGSK.

This sequence belongs to the RecA family.

It localises to the cytoplasm. Functionally, can catalyze the hydrolysis of ATP in the presence of single-stranded DNA, the ATP-dependent uptake of single-stranded DNA by duplex DNA, and the ATP-dependent hybridization of homologous single-stranded DNAs. It interacts with LexA causing its activation and leading to its autocatalytic cleavage. This chain is Protein RecA, found in Francisella tularensis subsp. tularensis (strain FSC 198).